A 231-amino-acid polypeptide reads, in one-letter code: Cytidylate kinase (231 aa).

18 to 26 (GPSGTGKSS) contacts ATP.

Belongs to the cytidylate kinase family. Type 1 subfamily.

Its subcellular location is the cytoplasm. It carries out the reaction CMP + ATP = CDP + ADP. The catalysed reaction is dCMP + ATP = dCDP + ADP. The polypeptide is Cytidylate kinase (Streptomyces coelicolor (strain ATCC BAA-471 / A3(2) / M145)).